Here is a 230-residue protein sequence, read N- to C-terminus: Ribonuclease HII (230 aa).

An RNase H type-2 domain is found at 28-217 (FRIAGIDEAG…VKEHLPSQPD (190 aa)). A divalent metal cation is bound by residues aspartate 34, glutamate 35, and aspartate 126. The tract at residues 211 to 230 (HLPSQPDCDTAGPSTGLFSF) is disordered.

It belongs to the RNase HII family. Requires Mn(2+) as cofactor. Mg(2+) serves as cofactor.

It localises to the cytoplasm. The enzyme catalyses Endonucleolytic cleavage to 5'-phosphomonoester.. Endonuclease that specifically degrades the RNA of RNA-DNA hybrids. In Geobacter sp. (strain M21), this protein is Ribonuclease HII.